A 261-amino-acid chain; its full sequence is Tryptophan synthase alpha chain (261 aa).

Residues glutamate 47 and aspartate 58 each act as proton acceptor in the active site.

Belongs to the TrpA family. Tetramer of two alpha and two beta chains.

It catalyses the reaction (1S,2R)-1-C-(indol-3-yl)glycerol 3-phosphate + L-serine = D-glyceraldehyde 3-phosphate + L-tryptophan + H2O. Its pathway is amino-acid biosynthesis; L-tryptophan biosynthesis; L-tryptophan from chorismate: step 5/5. The alpha subunit is responsible for the aldol cleavage of indoleglycerol phosphate to indole and glyceraldehyde 3-phosphate. This is Tryptophan synthase alpha chain from Neisseria gonorrhoeae (strain ATCC 700825 / FA 1090).